The primary structure comprises 466 residues: Ribulose bisphosphate carboxylase large chain (466 aa).

Lys-4 is modified (N6,N6,N6-trimethyllysine). Substrate is bound by residues Asn-113 and Thr-163. The Proton acceptor role is filled by Lys-165. Lys-167 provides a ligand contact to substrate. Residues Lys-191, Asp-193, and Glu-194 each contribute to the Mg(2+) site. The residue at position 191 (Lys-191) is an N6-carboxylysine. The Proton acceptor role is filled by His-284. Substrate-binding residues include Arg-285, His-317, and Ser-369.

This sequence belongs to the RuBisCO large chain family. Type I subfamily. In terms of assembly, heterohexadecamer of 8 large chains and 8 small chains; disulfide-linked. The disulfide link is formed within the large subunit homodimers. It depends on Mg(2+) as a cofactor. The disulfide bond which can form in the large chain dimeric partners within the hexadecamer appears to be associated with oxidative stress and protein turnover.

It localises to the plastid. The protein resides in the chloroplast. The catalysed reaction is 2 (2R)-3-phosphoglycerate + 2 H(+) = D-ribulose 1,5-bisphosphate + CO2 + H2O. The enzyme catalyses D-ribulose 1,5-bisphosphate + O2 = 2-phosphoglycolate + (2R)-3-phosphoglycerate + 2 H(+). In terms of biological role, ruBisCO catalyzes two reactions: the carboxylation of D-ribulose 1,5-bisphosphate, the primary event in carbon dioxide fixation, as well as the oxidative fragmentation of the pentose substrate in the photorespiration process. Both reactions occur simultaneously and in competition at the same active site. The polypeptide is Ribulose bisphosphate carboxylase large chain (Aphelandra sinclairiana (Orange shrimp plant)).